The chain runs to 121 residues: Large ribosomal subunit protein uL14c (121 aa).

The protein belongs to the universal ribosomal protein uL14 family. As to quaternary structure, part of the 50S ribosomal subunit.

The protein resides in the plastid. Its subcellular location is the chloroplast. Functionally, binds to 23S rRNA. The polypeptide is Large ribosomal subunit protein uL14c (Oedogonium cardiacum (Filamentous green alga)).